Here is a 362-residue protein sequence, read N- to C-terminus: Homeobox protein Nkx-2.3 (362 aa).

Disordered regions lie at residues 126–149 and 203–222; these read EAAGDCKTSEDGERPKPRSRRKPR and QRQDKSLELGTHAPPPPPRR. Residues 132 to 141 are compositionally biased toward basic and acidic residues; it reads KTSEDGERPK. Positions 145-204 form a DNA-binding region, homeobox; it reads RRKPRVLFSQAQVFELERRFKQQRYLSAPEREHLASSLKLTSTQVKIWFQNRRYKCKRQR.

This sequence belongs to the NK-2 homeobox family. Expressed in spleen and intestine. Also expressed in salivary gland and tongue.

Its subcellular location is the nucleus. Its function is as follows. Transcriptional regulator essential for normal development and functions of the small intestine and spleen. Activates directly MADCAM1 expression. Required for homing of lymphocytes in spleen and mucosa-associated lymphoid tissue. May have a role during pharyngeal organogenesis. The protein is Homeobox protein Nkx-2.3 (Nkx2-3) of Mus musculus (Mouse).